We begin with the raw amino-acid sequence, 349 residues long: Protein RecA (349 aa).

65–72 (GPESSGKT) is a binding site for ATP.

The protein belongs to the RecA family.

The protein localises to the cytoplasm. Functionally, can catalyze the hydrolysis of ATP in the presence of single-stranded DNA, the ATP-dependent uptake of single-stranded DNA by duplex DNA, and the ATP-dependent hybridization of homologous single-stranded DNAs. It interacts with LexA causing its activation and leading to its autocatalytic cleavage. The sequence is that of Protein RecA from Enterococcus faecium (Streptococcus faecium).